We begin with the raw amino-acid sequence, 297 residues long: Salivary glue protein Sgs-4 (297 aa).

The N-terminal stretch at 1–21 is a signal peptide; it reads MRLELLVVLLVGLAALAPSGS. Repeat copies occupy residues 26–32, 33–39, 40–46, 47–53, 54–60, 61–67, 68–74, 75–81, 82–88, 89–95, 96–102, 103–109, 110–116, 117–123, 124–130, 131–137, 138–144, 145–151, 152–158, 159–165, and 166–172. The disordered stretch occupies residues 26 to 84; the sequence is TEPPRCETEPPRCETEPPRCETEPPRCETEPPRCETTTPKCETTPPTCRTEPPTCKTEP. The 22 X 7 AA approximate tandem repeats of T-[ETK]-[PT]-P-[RKT]-C-[ERK] stretch occupies residues 26-179; that stretch reads TEPPRCETEP…TCKTEPPCEK (154 aa). Over residues 27–58 the composition is skewed to basic and acidic residues; that stretch reads EPPRCETEPPRCETEPPRCETEPPRCETEPPR. The span at 59–84 shows a compositional bias: low complexity; that stretch reads CETTTPKCETTPPTCRTEPPTCKTEP. The span at 141–174 shows a compositional bias: low complexity; that stretch reads PTCKTEPPTCRTEPPTCKTEPPTCKTEPPTCKTE. Disordered regions lie at residues 141–218 and 243–297; these read PTCK…SGCG and PDSK…KGGC. The stretch at 173 to 179 is one 22; approximate repeat; the sequence is TEPPCEK. 2 stretches are compositionally biased toward basic residues: residues 181–208 and 282–291; these read CTKRIKRHRTKRTKRSKSTKKIVHHHNR and NTTKKPRKTQ.

Salivary gland.

It localises to the secreted. The sequence is that of Salivary glue protein Sgs-4 (Sgs4) from Drosophila melanogaster (Fruit fly).